Reading from the N-terminus, the 33-residue chain is Brevinin-2 (33 aa).

A disulfide bridge links Cys27 with Cys33.

This sequence belongs to the frog skin active peptide (FSAP) family. Brevinin subfamily. In terms of tissue distribution, expressed by the skin glands.

It is found in the secreted. Functionally, shows antibacterial activity against representative Gram-negative and Gram-positive bacterial species, and a very high hemolytic activity. In Pelophylax porosus brevipodus (Nagoya Daruma pond frog), this protein is Brevinin-2.